Here is a 525-residue protein sequence, read N- to C-terminus: Glucose-6-phosphate isomerase (525 aa).

Glu-356 functions as the Proton donor in the catalytic mechanism. Active-site residues include His-387 and Lys-502.

The protein belongs to the GPI family.

It is found in the cytoplasm. The catalysed reaction is alpha-D-glucose 6-phosphate = beta-D-fructose 6-phosphate. Its pathway is carbohydrate biosynthesis; gluconeogenesis. It functions in the pathway carbohydrate degradation; glycolysis; D-glyceraldehyde 3-phosphate and glycerone phosphate from D-glucose: step 2/4. In terms of biological role, catalyzes the reversible isomerization of glucose-6-phosphate to fructose-6-phosphate. The sequence is that of Glucose-6-phosphate isomerase from Treponema denticola (strain ATCC 35405 / DSM 14222 / CIP 103919 / JCM 8153 / KCTC 15104).